Here is a 160-residue protein sequence, read N- to C-terminus: Phosphopantetheine adenylyltransferase (160 aa).

Ser10 is a substrate binding site. ATP is bound by residues 10–11 (SF) and His18. Substrate is bound by residues Lys42, Leu74, and Arg88. Residues 89 to 91 (GLR), Glu99, and 124 to 130 (YSFLSSS) each bind ATP.

The protein belongs to the bacterial CoaD family. In terms of assembly, homohexamer. Mg(2+) is required as a cofactor.

The protein resides in the cytoplasm. It carries out the reaction (R)-4'-phosphopantetheine + ATP + H(+) = 3'-dephospho-CoA + diphosphate. Its pathway is cofactor biosynthesis; coenzyme A biosynthesis; CoA from (R)-pantothenate: step 4/5. Reversibly transfers an adenylyl group from ATP to 4'-phosphopantetheine, yielding dephospho-CoA (dPCoA) and pyrophosphate. The chain is Phosphopantetheine adenylyltransferase from Bacillus velezensis (strain DSM 23117 / BGSC 10A6 / LMG 26770 / FZB42) (Bacillus amyloliquefaciens subsp. plantarum).